The chain runs to 151 residues: Flagellar assembly factor FliW (151 aa).

Belongs to the FliW family. Interacts with translational regulator CsrA and flagellin(s).

It localises to the cytoplasm. In terms of biological role, acts as an anti-CsrA protein, binds CsrA and prevents it from repressing translation of its target genes, one of which is flagellin. Binds to flagellin and participates in the assembly of the flagellum. This Natranaerobius thermophilus (strain ATCC BAA-1301 / DSM 18059 / JW/NM-WN-LF) protein is Flagellar assembly factor FliW.